Reading from the N-terminus, the 673-residue chain is UvrABC system protein B (673 aa).

The Helicase ATP-binding domain occupies 26–183 (EGLEDGLAHQ…RRLAELQYTR (158 aa)). 39-46 (GVTGSGKT) contacts ATP. The Beta-hairpin signature appears at 92–115 (YYDYYQPEAYVPSSDTFIEKDASV). Positions 431 to 597 (QVDDLLSEIR…GLNKKVVDIL (167 aa)) constitute a Helicase C-terminal domain. Positions 633–668 (QQKIHELEGQMMQHAQNLEFEEAAQIRDQLHQLREL) constitute a UVR domain.

The protein belongs to the UvrB family. Forms a heterotetramer with UvrA during the search for lesions. Interacts with UvrC in an incision complex.

The protein localises to the cytoplasm. In terms of biological role, the UvrABC repair system catalyzes the recognition and processing of DNA lesions. A damage recognition complex composed of 2 UvrA and 2 UvrB subunits scans DNA for abnormalities. Upon binding of the UvrA(2)B(2) complex to a putative damaged site, the DNA wraps around one UvrB monomer. DNA wrap is dependent on ATP binding by UvrB and probably causes local melting of the DNA helix, facilitating insertion of UvrB beta-hairpin between the DNA strands. Then UvrB probes one DNA strand for the presence of a lesion. If a lesion is found the UvrA subunits dissociate and the UvrB-DNA preincision complex is formed. This complex is subsequently bound by UvrC and the second UvrB is released. If no lesion is found, the DNA wraps around the other UvrB subunit that will check the other stand for damage. This Salmonella agona (strain SL483) protein is UvrABC system protein B.